The chain runs to 160 residues: MSKEVIVESFELDHTIVKAPYVRLIGEETGPKGDIISNYDIRLVQPNEDSIPTAGLHTIEHLLAKLIRTRIDGMIDCSPFGCRTGFHMIMWGRHTSAKIAAVIKDSLKEIAETTTWEDVPGTTIESCGNYKDHSLFSAKEWARLILEQGISDDAFERHVI.

Positions 57, 61, and 127 each coordinate Fe cation.

Belongs to the LuxS family. As to quaternary structure, homodimer. Fe cation is required as a cofactor.

It catalyses the reaction S-(5-deoxy-D-ribos-5-yl)-L-homocysteine = (S)-4,5-dihydroxypentane-2,3-dione + L-homocysteine. Involved in the synthesis of autoinducer 2 (AI-2) which is secreted by bacteria and is used to communicate both the cell density and the metabolic potential of the environment. The regulation of gene expression in response to changes in cell density is called quorum sensing. Catalyzes the transformation of S-ribosylhomocysteine (RHC) to homocysteine (HC) and 4,5-dihydroxy-2,3-pentadione (DPD). This chain is S-ribosylhomocysteine lyase, found in Streptococcus pneumoniae (strain CGSP14).